The primary structure comprises 617 residues: ATP-dependent RNA helicase DBP1 (617 aa).

Residues 1-90 form a disordered region; it reads MADLPQKVSN…TSANYNRGGS (90 aa). Positions 7–17 are enriched in polar residues; that stretch reads KVSNLSINNKE. Residues 38–58 are compositionally biased toward basic and acidic residues; the sequence is PSFERSTPKQEDKVTGGDFFR. Positions 79–90 are enriched in polar residues; the sequence is GGTSANYNRGGS. Positions 154–182 match the Q motif motif; that stretch reads LDFSSPPLDELLMENIKLASFTKPTPVQK. The Helicase ATP-binding domain maps to 185–374; sequence IPIVTKGRDL…RDFLDNYIFL (190 aa). ATP is bound at residue 198–205; it reads AQTGSGKT. The DEAD box signature appears at 318 to 321; it reads DEAD. One can recognise a Helicase C-terminal domain in the interval 385 to 545; that stretch reads NITQRILYVD…EVPTFLSDLS (161 aa). The segment at 542 to 617 is disordered; the sequence is SDLSRQNSRG…GYGNSNASWW (76 aa). Polar residues predominate over residues 580-594; sequence FGSTRPRNTGTSNWG.

It belongs to the DEAD box helicase family. DDX3/DED1 subfamily.

It localises to the cytoplasm. It carries out the reaction ATP + H2O = ADP + phosphate + H(+). ATP-binding RNA helicase involved in translation initiation. Remodels RNA in response to ADP and ATP concentrations by facilitating disruption, but also formation of RNA duplexes. Redundant to DED1, may be required in conditions in which DED1 expression is decreased. This Saccharomyces cerevisiae (strain ATCC 204508 / S288c) (Baker's yeast) protein is ATP-dependent RNA helicase DBP1 (DBP1).